Consider the following 344-residue polypeptide: Geranylgeranyl pyrophosphate synthase 10, mitochondrial (344 aa).

The transit peptide at 1–40 (MENREVFVYIVISIFRSLQFLFWRFRPRYNDVTSALTRPL) directs the protein to the mitochondrion. Residues lysine 91, arginine 94, and histidine 123 each coordinate isopentenyl diphosphate. The Mg(2+) site is built by aspartate 130 and aspartate 136. Arginine 141 lines the dimethylallyl diphosphate pocket. Arginine 142 contributes to the isopentenyl diphosphate binding site. Lysine 229, threonine 230, glutamine 267, lysine 284, and lysine 294 together coordinate dimethylallyl diphosphate.

This sequence belongs to the FPP/GGPP synthase family. Monomer. Mg(2+) is required as a cofactor.

It is found in the mitochondrion. The catalysed reaction is isopentenyl diphosphate + dimethylallyl diphosphate = (2E)-geranyl diphosphate + diphosphate. It catalyses the reaction isopentenyl diphosphate + (2E)-geranyl diphosphate = (2E,6E)-farnesyl diphosphate + diphosphate. It carries out the reaction isopentenyl diphosphate + (2E,6E)-farnesyl diphosphate = (2E,6E,10E)-geranylgeranyl diphosphate + diphosphate. The protein operates within isoprenoid biosynthesis; farnesyl diphosphate biosynthesis; farnesyl diphosphate from geranyl diphosphate and isopentenyl diphosphate: step 1/1. It participates in isoprenoid biosynthesis; geranyl diphosphate biosynthesis; geranyl diphosphate from dimethylallyl diphosphate and isopentenyl diphosphate: step 1/1. Its pathway is isoprenoid biosynthesis; geranylgeranyl diphosphate biosynthesis; geranylgeranyl diphosphate from farnesyl diphosphate and isopentenyl diphosphate: step 1/1. Its function is as follows. Catalyzes the trans-addition of the three molecules of IPP onto DMAPP to form geranylgeranyl pyrophosphate. The protein is Geranylgeranyl pyrophosphate synthase 10, mitochondrial of Arabidopsis thaliana (Mouse-ear cress).